The sequence spans 180 residues: Phosphoribosylaminoimidazole carboxylase (180 aa).

The substrate site is built by Ser35, Asp38, Ser62, Lys65, Gly89, and Ser91.

It belongs to the AIR carboxylase family. Class II subfamily.

The enzyme catalyses 5-amino-1-(5-phospho-D-ribosyl)imidazole-4-carboxylate + H(+) = 5-amino-1-(5-phospho-beta-D-ribosyl)imidazole + CO2. Its pathway is purine metabolism; IMP biosynthesis via de novo pathway; 5-amino-1-(5-phospho-D-ribosyl)imidazole-4-carboxylate from 5-amino-1-(5-phospho-D-ribosyl)imidazole (carboxylase route): step 1/1. Catalyzes the reversible conversion of 5-aminoimidazole ribonucleotide (AIR) and CO(2) to 4-carboxy-5-aminoimidazole ribonucleotide (CAIR). In Archaeoglobus fulgidus (strain ATCC 49558 / DSM 4304 / JCM 9628 / NBRC 100126 / VC-16), this protein is Phosphoribosylaminoimidazole carboxylase.